The primary structure comprises 214 residues: Probable nicotinate-nucleotide adenylyltransferase (214 aa).

It belongs to the NadD family.

It catalyses the reaction nicotinate beta-D-ribonucleotide + ATP + H(+) = deamido-NAD(+) + diphosphate. The protein operates within cofactor biosynthesis; NAD(+) biosynthesis; deamido-NAD(+) from nicotinate D-ribonucleotide: step 1/1. Functionally, catalyzes the reversible adenylation of nicotinate mononucleotide (NaMN) to nicotinic acid adenine dinucleotide (NaAD). This chain is Probable nicotinate-nucleotide adenylyltransferase, found in Thermomicrobium roseum (strain ATCC 27502 / DSM 5159 / P-2).